A 114-amino-acid polypeptide reads, in one-letter code: uncharacterized protein (114 aa).

This is an uncharacterized protein from Sputnik virophage.